We begin with the raw amino-acid sequence, 230 residues long: Putative N-acetylmannosamine-6-phosphate 2-epimerase (230 aa).

Belongs to the NanE family.

It carries out the reaction an N-acyl-D-glucosamine 6-phosphate = an N-acyl-D-mannosamine 6-phosphate. It participates in amino-sugar metabolism; N-acetylneuraminate degradation; D-fructose 6-phosphate from N-acetylneuraminate: step 3/5. Converts N-acetylmannosamine-6-phosphate (ManNAc-6-P) to N-acetylglucosamine-6-phosphate (GlcNAc-6-P). This is Putative N-acetylmannosamine-6-phosphate 2-epimerase from Malacoplasma penetrans (strain HF-2) (Mycoplasma penetrans).